We begin with the raw amino-acid sequence, 281 residues long: Transcription factor bHLH79 (281 aa).

The tract at residues 47 to 167 is disordered; sequence FTRSEHSGNK…GQATDRHSLA (121 aa). Basic and acidic residues-rich tracts occupy residues 77–88 and 138–152; these read KTRDLNSEDDSS and TEQK…DYIH. A bHLH domain is found at 159–209; that stretch reads QATDRHSLAERARREKISEKMTALQDIIPGCNKIIGKALVLDEIINYIQSL.

Homodimer.

It localises to the nucleus. The protein is Transcription factor bHLH79 (BHLH79) of Arabidopsis thaliana (Mouse-ear cress).